Here is a 205-residue protein sequence, read N- to C-terminus: Putative 3-methyladenine DNA glycosylase (205 aa).

Belongs to the DNA glycosylase MPG family.

This Bacillus cereus (strain ATCC 10987 / NRS 248) protein is Putative 3-methyladenine DNA glycosylase.